The following is a 613-amino-acid chain: Zinc finger CCCH domain-containing protein 59 (613 aa).

The disordered stretch occupies residues 275-296 (NTTLSPYISPAKSVPVEETPKR). C3H1-type zinc fingers lie at residues 318 to 346 (AGGN…HDEE) and 350 to 378 (HYNR…HSLS).

The chain is Zinc finger CCCH domain-containing protein 59 from Oryza sativa subsp. japonica (Rice).